The following is a 1228-amino-acid chain: DNA-directed RNA polymerase subunit beta (1228 aa).

The segment at 1175–1204 is disordered; it reads ESVDEDEQPQGLGAFEIGGDEIEEDKEDDK. The segment covering 1192-1202 has biased composition (acidic residues); that stretch reads GGDEIEEDKED.

Belongs to the RNA polymerase beta chain family. The RNAP catalytic core consists of 2 alpha, 1 beta, 1 beta' and 1 omega subunit. When a sigma factor is associated with the core the holoenzyme is formed, which can initiate transcription.

It carries out the reaction RNA(n) + a ribonucleoside 5'-triphosphate = RNA(n+1) + diphosphate. Its function is as follows. DNA-dependent RNA polymerase catalyzes the transcription of DNA into RNA using the four ribonucleoside triphosphates as substrates. The polypeptide is DNA-directed RNA polymerase subunit beta (Caldicellulosiruptor bescii (strain ATCC BAA-1888 / DSM 6725 / KCTC 15123 / Z-1320) (Anaerocellum thermophilum)).